Reading from the N-terminus, the 236-residue chain is Ubiquinone biosynthesis O-methyltransferase (236 aa).

S-adenosyl-L-methionine contacts are provided by arginine 40, glycine 59, aspartate 80, and leucine 124.

This sequence belongs to the methyltransferase superfamily. UbiG/COQ3 family.

It catalyses the reaction a 3-demethylubiquinol + S-adenosyl-L-methionine = a ubiquinol + S-adenosyl-L-homocysteine + H(+). It carries out the reaction a 3-(all-trans-polyprenyl)benzene-1,2-diol + S-adenosyl-L-methionine = a 2-methoxy-6-(all-trans-polyprenyl)phenol + S-adenosyl-L-homocysteine + H(+). Its pathway is cofactor biosynthesis; ubiquinone biosynthesis. In terms of biological role, O-methyltransferase that catalyzes the 2 O-methylation steps in the ubiquinone biosynthetic pathway. The protein is Ubiquinone biosynthesis O-methyltransferase of Nitrosococcus oceani (strain ATCC 19707 / BCRC 17464 / JCM 30415 / NCIMB 11848 / C-107).